The chain runs to 125 residues: Phosphoribosyl-AMP cyclohydrolase (125 aa).

Asp74 is a binding site for Mg(2+). Residue Cys75 participates in Zn(2+) binding. The Mg(2+) site is built by Asp76 and Asp78. Zn(2+) contacts are provided by Cys92 and Cys99.

The protein belongs to the PRA-CH family. As to quaternary structure, homodimer. Mg(2+) serves as cofactor. It depends on Zn(2+) as a cofactor.

It is found in the cytoplasm. It catalyses the reaction 1-(5-phospho-beta-D-ribosyl)-5'-AMP + H2O = 1-(5-phospho-beta-D-ribosyl)-5-[(5-phospho-beta-D-ribosylamino)methylideneamino]imidazole-4-carboxamide. It functions in the pathway amino-acid biosynthesis; L-histidine biosynthesis; L-histidine from 5-phospho-alpha-D-ribose 1-diphosphate: step 3/9. Catalyzes the hydrolysis of the adenine ring of phosphoribosyl-AMP. This chain is Phosphoribosyl-AMP cyclohydrolase, found in Desulforapulum autotrophicum (strain ATCC 43914 / DSM 3382 / VKM B-1955 / HRM2) (Desulfobacterium autotrophicum).